Here is a 183-residue protein sequence, read N- to C-terminus: Probable GTP-binding protein EngB (183 aa).

The EngB-type G domain occupies 17–183; that stretch reads DYPEVVFVGR…KKELLSRILN (167 aa). GTP contacts are provided by residues 25–32, 51–55, 69–72, 137–140, and 166–168; these read GRSNVGKS, GRTRA, DVPG, TKID, and SSA. Mg(2+) contacts are provided by Ser32 and Thr53.

The protein belongs to the TRAFAC class TrmE-Era-EngA-EngB-Septin-like GTPase superfamily. EngB GTPase family. The cofactor is Mg(2+).

Necessary for normal cell division and for the maintenance of normal septation. This chain is Probable GTP-binding protein EngB, found in Aquifex aeolicus (strain VF5).